Reading from the N-terminus, the 426-residue chain is Serine--tRNA ligase (426 aa).

231 to 233 (TAE) serves as a coordination point for L-serine. 262-264 (RAE) provides a ligand contact to ATP. Glutamate 285 lines the L-serine pocket. Residue 349–352 (EISS) participates in ATP binding. Serine 385 lines the L-serine pocket.

It belongs to the class-II aminoacyl-tRNA synthetase family. Type-1 seryl-tRNA synthetase subfamily. In terms of assembly, homodimer. The tRNA molecule binds across the dimer.

Its subcellular location is the cytoplasm. It catalyses the reaction tRNA(Ser) + L-serine + ATP = L-seryl-tRNA(Ser) + AMP + diphosphate + H(+). It carries out the reaction tRNA(Sec) + L-serine + ATP = L-seryl-tRNA(Sec) + AMP + diphosphate + H(+). It functions in the pathway aminoacyl-tRNA biosynthesis; selenocysteinyl-tRNA(Sec) biosynthesis; L-seryl-tRNA(Sec) from L-serine and tRNA(Sec): step 1/1. Its function is as follows. Catalyzes the attachment of serine to tRNA(Ser). Is also able to aminoacylate tRNA(Sec) with serine, to form the misacylated tRNA L-seryl-tRNA(Sec), which will be further converted into selenocysteinyl-tRNA(Sec). The protein is Serine--tRNA ligase of Myxococcus xanthus (strain DK1622).